The following is a 79-amino-acid chain: Acyl carrier protein (79 aa).

One can recognise a Carrier domain in the interval 2 to 77; the sequence is SDIGERVKKI…DATKFLEKNA (76 aa). Ser37 is modified (O-(pantetheine 4'-phosphoryl)serine).

The protein belongs to the acyl carrier protein (ACP) family. In terms of processing, 4'-phosphopantetheine is transferred from CoA to a specific serine of apo-ACP by AcpS. This modification is essential for activity because fatty acids are bound in thioester linkage to the sulfhydryl of the prosthetic group.

Its subcellular location is the cytoplasm. It participates in lipid metabolism; fatty acid biosynthesis. In terms of biological role, carrier of the growing fatty acid chain in fatty acid biosynthesis. In Bradyrhizobium diazoefficiens (strain JCM 10833 / BCRC 13528 / IAM 13628 / NBRC 14792 / USDA 110), this protein is Acyl carrier protein.